A 480-amino-acid chain; its full sequence is Aspartyl/glutamyl-tRNA(Asn/Gln) amidotransferase subunit B (480 aa).

The protein belongs to the GatB/GatE family. GatB subfamily. In terms of assembly, heterotrimer of A, B and C subunits.

The catalysed reaction is L-glutamyl-tRNA(Gln) + L-glutamine + ATP + H2O = L-glutaminyl-tRNA(Gln) + L-glutamate + ADP + phosphate + H(+). It catalyses the reaction L-aspartyl-tRNA(Asn) + L-glutamine + ATP + H2O = L-asparaginyl-tRNA(Asn) + L-glutamate + ADP + phosphate + 2 H(+). Its function is as follows. Allows the formation of correctly charged Asn-tRNA(Asn) or Gln-tRNA(Gln) through the transamidation of misacylated Asp-tRNA(Asn) or Glu-tRNA(Gln) in organisms which lack either or both of asparaginyl-tRNA or glutaminyl-tRNA synthetases. The reaction takes place in the presence of glutamine and ATP through an activated phospho-Asp-tRNA(Asn) or phospho-Glu-tRNA(Gln). The polypeptide is Aspartyl/glutamyl-tRNA(Asn/Gln) amidotransferase subunit B (Streptococcus agalactiae serotype Ia (strain ATCC 27591 / A909 / CDC SS700)).